The following is a 383-amino-acid chain: Succinyl-diaminopimelate desuccinylase (383 aa).

Histidine 69 contacts Zn(2+). Aspartate 71 is an active-site residue. Residue aspartate 103 participates in Zn(2+) binding. Glutamate 137 serves as the catalytic Proton acceptor. The Zn(2+) site is built by glutamate 138, glutamate 166, and histidine 357.

It belongs to the peptidase M20A family. DapE subfamily. In terms of assembly, homodimer. Zn(2+) is required as a cofactor. Requires Co(2+) as cofactor.

It catalyses the reaction N-succinyl-(2S,6S)-2,6-diaminopimelate + H2O = (2S,6S)-2,6-diaminopimelate + succinate. It functions in the pathway amino-acid biosynthesis; L-lysine biosynthesis via DAP pathway; LL-2,6-diaminopimelate from (S)-tetrahydrodipicolinate (succinylase route): step 3/3. Functionally, catalyzes the hydrolysis of N-succinyl-L,L-diaminopimelic acid (SDAP), forming succinate and LL-2,6-diaminopimelate (DAP), an intermediate involved in the bacterial biosynthesis of lysine and meso-diaminopimelic acid, an essential component of bacterial cell walls. The protein is Succinyl-diaminopimelate desuccinylase of Rickettsia prowazekii (strain Madrid E).